The primary structure comprises 447 residues: Argininosuccinate lyase (447 aa).

This sequence belongs to the lyase 1 family. Argininosuccinate lyase subfamily.

It is found in the cytoplasm. It catalyses the reaction 2-(N(omega)-L-arginino)succinate = fumarate + L-arginine. It functions in the pathway amino-acid biosynthesis; L-arginine biosynthesis; L-arginine from L-ornithine and carbamoyl phosphate: step 3/3. This chain is Argininosuccinate lyase, found in Bacteroides fragilis (strain YCH46).